Consider the following 100-residue polypeptide: Urease subunit gamma (100 aa).

Belongs to the urease gamma subunit family. In terms of assembly, heterotrimer of UreA (gamma), UreB (beta) and UreC (alpha) subunits. Three heterotrimers associate to form the active enzyme.

It is found in the cytoplasm. It catalyses the reaction urea + 2 H2O + H(+) = hydrogencarbonate + 2 NH4(+). It participates in nitrogen metabolism; urea degradation; CO(2) and NH(3) from urea (urease route): step 1/1. The sequence is that of Urease subunit gamma from Saccharopolyspora erythraea (strain ATCC 11635 / DSM 40517 / JCM 4748 / NBRC 13426 / NCIMB 8594 / NRRL 2338).